Consider the following 796-residue polypeptide: Kinesin-like protein KIF3C (796 aa).

A Kinesin motor domain is found at 10 to 367; it reads ALKVVARCRP…LRFANRAKNI (358 aa). 97-104 contacts ATP; that stretch reads GQTGTGKT. 3 disordered regions span residues 251-292, 397-421, and 754-796; these read ERQN…PKEA, EKKG…SAPA, and PSTS…VDHD. Positions 270–284 are enriched in gly residues; it reads AGGGGGGGGTSGSGS. Residues 378–632 are a coiled coil; sequence KDTLLREFQE…NEQTRELKLK (255 aa). Over residues 401–416 the composition is skewed to basic residues; it reads MLGKRPRRKSSRRKKA. Residues 633-793 are globular; sequence YLIIENFIPP…SAPLHPATVV (161 aa).

This sequence belongs to the TRAFAC class myosin-kinesin ATPase superfamily. Kinesin family. Kinesin II subfamily. In terms of assembly, heterodimer of KIF3A and KIF3C.

The protein localises to the cytoplasm. It is found in the cytoskeleton. In terms of biological role, microtubule-based anterograde translocator for membranous organelles. The sequence is that of Kinesin-like protein KIF3C (Kif3c) from Rattus norvegicus (Rat).